Reading from the N-terminus, the 210-residue chain is Probable GTP-binding protein EngB (210 aa).

Positions Thr-25–Glu-199 constitute an EngB-type G domain. Residues Gly-33 to Ser-40, Gly-60 to Leu-64, Asp-78 to Gly-81, Thr-145 to Asp-148, and Phe-178 to Ser-180 each bind GTP. The Mg(2+) site is built by Ser-40 and Thr-62.

This sequence belongs to the TRAFAC class TrmE-Era-EngA-EngB-Septin-like GTPase superfamily. EngB GTPase family. It depends on Mg(2+) as a cofactor.

In terms of biological role, necessary for normal cell division and for the maintenance of normal septation. The polypeptide is Probable GTP-binding protein EngB (Klebsiella pneumoniae subsp. pneumoniae (strain ATCC 700721 / MGH 78578)).